Reading from the N-terminus, the 458-residue chain is Cell division protein FtsZ (458 aa).

Residues 22 to 26 (GAGGN), 109 to 111 (GTG), Glu-140, Arg-144, and Asp-188 contribute to the GTP site. The interval 319–458 (KAEEEASKQP…IPFFKHRRQD (140 aa)) is disordered. Over residues 368–379 (NTISHEAPTQSI) the composition is skewed to polar residues. The segment covering 401–418 (KQDRKENNRPQPVENKEK) has biased composition (basic and acidic residues). A compositionally biased stretch (low complexity) spans 425-439 (SFSSDDSTSISQIET).

The protein belongs to the FtsZ family. As to quaternary structure, homodimer. Polymerizes to form a dynamic ring structure in a strictly GTP-dependent manner. Interacts directly with several other division proteins.

Its subcellular location is the cytoplasm. Essential cell division protein that forms a contractile ring structure (Z ring) at the future cell division site. The regulation of the ring assembly controls the timing and the location of cell division. One of the functions of the FtsZ ring is to recruit other cell division proteins to the septum to produce a new cell wall between the dividing cells. Binds GTP and shows GTPase activity. This chain is Cell division protein FtsZ, found in Lactobacillus johnsonii (strain CNCM I-12250 / La1 / NCC 533).